A 209-amino-acid polypeptide reads, in one-letter code: PRA1 family protein A3 (209 aa).

The next 4 membrane-spanning stretches (helical) occupy residues 51–72 (LYYYRTNYFILFVFVLGLALIT), 76–98 (AILGAALTALSLAFLNDSFAATF), 143–163 (LVFVLLGLTASFVLWFTSCGL), and 164–184 (LWVLYALTTALLMILLHASLR).

It belongs to the PRA1 family.

The protein localises to the endosome membrane. In terms of biological role, may be involved in both secretory and endocytic intracellular trafficking in the endosomal/prevacuolar compartments. In Arabidopsis thaliana (Mouse-ear cress), this protein is PRA1 family protein A3 (PRA1A3).